Reading from the N-terminus, the 198-residue chain is Recombination protein RecR (198 aa).

The segment at 56-71 (CGVCGNVDTSNPCGIC) adopts a C4-type zinc-finger fold. The Toprim domain occupies 79-174 (RSICVVEEVA…RVTQLAHGLP (96 aa)).

Belongs to the RecR family.

Its function is as follows. May play a role in DNA repair. It seems to be involved in an RecBC-independent recombinational process of DNA repair. It may act with RecF and RecO. In Novosphingobium aromaticivorans (strain ATCC 700278 / DSM 12444 / CCUG 56034 / CIP 105152 / NBRC 16084 / F199), this protein is Recombination protein RecR.